Here is a 222-residue protein sequence, read N- to C-terminus: Adenylate kinase (222 aa).

An ATP-binding site is contributed by 16–21; that stretch reads GAGKGT. The tract at residues 36-65 is NMP; the sequence is ATGDMLRSQISKGTELGLQAKKIMDQGGLV. AMP-binding positions include T37, R42, 63–65, 92–95, and Q99; these read GLV and GFPR. Residues 133 to 170 form an LID region; the sequence is GRLIHPASGRSYHKLFNPPKEDMKDDVTGEPLVQRSDD. ATP contacts are provided by residues R134 and 143–144; that span reads SY. Residues R167 and R178 each coordinate AMP. Residue Q206 participates in ATP binding.

This sequence belongs to the adenylate kinase family. AK2 subfamily. In terms of assembly, monomer.

The protein localises to the cytoplasm. It is found in the cytosol. It localises to the mitochondrion intermembrane space. The catalysed reaction is AMP + ATP = 2 ADP. Its function is as follows. Catalyzes the reversible transfer of the terminal phosphate group between ATP and AMP. Plays an important role in cellular energy homeostasis and in adenine nucleotide metabolism. Adenylate kinase activity is critical for regulation of the phosphate utilization and the AMP de novo biosynthesis pathways. The protein is Adenylate kinase of Candida glabrata (strain ATCC 2001 / BCRC 20586 / JCM 3761 / NBRC 0622 / NRRL Y-65 / CBS 138) (Yeast).